A 586-amino-acid chain; its full sequence is Arginine--tRNA ligase (586 aa).

Positions 131–141 (ANPTGPMHVGH) match the 'HIGH' region motif.

Belongs to the class-I aminoacyl-tRNA synthetase family. In terms of assembly, monomer.

Its subcellular location is the cytoplasm. It carries out the reaction tRNA(Arg) + L-arginine + ATP = L-arginyl-tRNA(Arg) + AMP + diphosphate. The chain is Arginine--tRNA ligase from Azorhizobium caulinodans (strain ATCC 43989 / DSM 5975 / JCM 20966 / LMG 6465 / NBRC 14845 / NCIMB 13405 / ORS 571).